The following is a 393-amino-acid chain: Chalcone synthase LF2 (393 aa).

C164 is a catalytic residue.

The protein belongs to the thiolase-like superfamily. Chalcone/stilbene synthases family.

The enzyme catalyses (E)-4-coumaroyl-CoA + 3 malonyl-CoA + 3 H(+) = 2',4,4',6'-tetrahydroxychalcone + 3 CO2 + 4 CoA. It functions in the pathway secondary metabolite biosynthesis; flavonoid biosynthesis. In terms of biological role, the primary product of this enzyme is 4,2',4',6'-tetrahydroxychalcone (also termed naringenin-chalcone or chalcone) which can under specific conditions spontaneously isomerize into naringenin. The chain is Chalcone synthase LF2 (CHS-LF2) from Ipomoea batatas (Sweet potato).